The sequence spans 458 residues: MSRSTPSRSTPSRPVLRFAPSPTGLIHVGNARTALINALLARRAGGTFILRFDDTDAARSRAEYADAIATDLAWLGIPPDLTFRQSDRIGEYEAATQQLKASGRLYPAYESEDELELKRRLQRARSLPPVYDRAALALTAADRARLEAEGRRPHWRFRLDHRVVAWDDGVRGPQQVDTASLSDPVLVRADGSFLYTLPSVVDDLAMGVTDVVRGEDHVTNTAVQIEIFEALGGVAPRFAHHNLLTLPSGEGLSKRLGHLSLSALREAGQEALAVAAAAVLVGTSHAVEAVESLEALAGMVDLAHISRAPARFDPDDLAQLTARTLHMMPFEAAASRLAAAGIGGGVAFWLAVRGNLARFSEAADWWALVSQPAAGVVAESDRTFLGEAAALLPPEPWDGQTYANWIKAVKAASGQSGKALFHPLRLALTGLEKGPELAALLPLMGRERVAGRLGGGVA.

A 'HIGH' region motif is present at residues 20 to 30; sequence PSPTGLIHVGN. Residues 251–255 carry the 'KMSKS' region motif; it reads GLSKR. K254 contributes to the ATP binding site.

This sequence belongs to the class-I aminoacyl-tRNA synthetase family. Glutamate--tRNA ligase type 1 subfamily. Monomer.

Its subcellular location is the cytoplasm. The enzyme catalyses tRNA(Glu) + L-glutamate + ATP = L-glutamyl-tRNA(Glu) + AMP + diphosphate. Catalyzes the attachment of glutamate to tRNA(Glu) in a two-step reaction: glutamate is first activated by ATP to form Glu-AMP and then transferred to the acceptor end of tRNA(Glu). The sequence is that of Glutamate--tRNA ligase 2 from Xanthobacter autotrophicus (strain ATCC BAA-1158 / Py2).